A 309-amino-acid chain; its full sequence is Zinc transporter ZIP2 (309 aa).

Topologically, residues 1 to 8 (MEVLLGVK) are extracellular. The chain crosses the membrane as a helical span at residues 9–29 (IGCLLALLVLTLGCGLTPIYV). Topologically, residues 30–43 (KWFQMDAATGHHHR) are cytoplasmic. A helical transmembrane segment spans residues 44–64 (VLSLLGCTSAGVFLGAGLMHM). Over 65–103 (TAEALEGIESEIQKFVEQNSTGSKGNSSRDAASSYVEYP) the chain is Extracellular. Residues 104-124 (YGELVISLGFFFVFLLESLAL) traverse the membrane as a helical segment. At 125-164 (QCCHGAAGGSTVQEEEWGGTHAFGFHKHPAVPSPSRGPLR) the chain is on the cytoplasmic side. Residues 165-185 (ALVLLLSLSFHSVFEGLAVGL) form a helical membrane-spanning segment. The Zn(2+) site is built by H175 and E179. Residues 186 to 191 (QATVAA) lie on the Extracellular side of the membrane. A helical membrane pass occupies residues 192–212 (TIQLCVAVLAHKGLVVFSVGL). Position 202 (H202) interacts with Zn(2+). At 213–225 (RLGKIGTGPRWAT) the chain is on the cytoplasmic side. The helical transmembrane segment at 226-246 (FCILSLALMSPVGLALGLTVA) threads the bilayer. Residues 247-258 (GGASGQTQGLAQ) are Extracellular-facing. The helical transmembrane segment at 259–279 (AVLEGIAAGTFLYVTFLEILP) threads the bilayer. E276 serves as a coordination point for Zn(2+). The Cytoplasmic segment spans residues 280–288 (RELACPEAP). A helical membrane pass occupies residues 289–309 (LAKYSCVAAGFAFMALIALWA).

This sequence belongs to the ZIP transporter (TC 2.A.5) family. High expression in the liver, skin and ovary.

It is found in the cell membrane. The enzyme catalyses Zn(2+)(in) = Zn(2+)(out). It carries out the reaction Cd(2+)(in) = Cd(2+)(out). Its function is as follows. Transporter for the divalent cation Zn(2+). Mediates the influx of Zn(2+) into cells from extracellular space. The Zn(2+) uniporter activity is independent of H(+)-driving force, but is modulated by extracellular pH and membrane potential. Transports also other divalent cations Zn(2+), Cd2(+), Cu2(+), Co2(+) in the order of decreasing affinity, respectively. In the skin, aids in the differentiation of keratinocytes in the epidermis. The sequence is that of Zinc transporter ZIP2 (Slc39a2) from Mus musculus (Mouse).